The following is a 137-amino-acid chain: Putative pre-16S rRNA nuclease (137 aa).

It belongs to the YqgF nuclease family.

Its subcellular location is the cytoplasm. Functionally, could be a nuclease involved in processing of the 5'-end of pre-16S rRNA. This Bacillus mycoides (strain KBAB4) (Bacillus weihenstephanensis) protein is Putative pre-16S rRNA nuclease.